A 279-amino-acid chain; its full sequence is Polyamine aminopropyltransferase (279 aa).

In terms of domain architecture, PABS spans 4-237 (IEWYPRGYGV…SPWAFLVGIK (234 aa)). Glutamine 29 provides a ligand contact to S-methyl-5'-thioadenosine. Spermidine-binding residues include histidine 60 and aspartate 84. S-methyl-5'-thioadenosine contacts are provided by residues glutamate 104 and 141 to 142 (DG). The active-site Proton acceptor is aspartate 158. 158-161 (DSTD) contacts spermidine. Proline 165 serves as a coordination point for S-methyl-5'-thioadenosine.

Belongs to the spermidine/spermine synthase family. In terms of assembly, homodimer or homotetramer.

It is found in the cytoplasm. The catalysed reaction is S-adenosyl 3-(methylsulfanyl)propylamine + putrescine = S-methyl-5'-thioadenosine + spermidine + H(+). It participates in amine and polyamine biosynthesis; spermidine biosynthesis; spermidine from putrescine: step 1/1. Functionally, catalyzes the irreversible transfer of a propylamine group from the amino donor S-adenosylmethioninamine (decarboxy-AdoMet) to putrescine (1,4-diaminobutane) to yield spermidine. The sequence is that of Polyamine aminopropyltransferase from Pyrococcus abyssi (strain GE5 / Orsay).